A 968-amino-acid chain; its full sequence is RNA polymerase-associated protein RapA (968 aa).

Residues 164–334 (DVGRRHAPRV…FARLRLLDPN (171 aa)) enclose the Helicase ATP-binding domain. Residue 177-184 (DEVGLGKT) participates in ATP binding. The DEAH box motif lies at 280–283 (DEAH). In terms of domain architecture, Helicase C-terminal spans 490 to 685 (RVEWLMGYLT…ALKAQLEQGR (196 aa)).

It belongs to the SNF2/RAD54 helicase family. RapA subfamily. In terms of assembly, interacts with the RNAP. Has a higher affinity for the core RNAP than for the holoenzyme. Its ATPase activity is stimulated by binding to RNAP.

In terms of biological role, transcription regulator that activates transcription by stimulating RNA polymerase (RNAP) recycling in case of stress conditions such as supercoiled DNA or high salt concentrations. Probably acts by releasing the RNAP, when it is trapped or immobilized on tightly supercoiled DNA. Does not activate transcription on linear DNA. Probably not involved in DNA repair. This Salmonella paratyphi C (strain RKS4594) protein is RNA polymerase-associated protein RapA.